Here is a 323-residue protein sequence, read N- to C-terminus: Arginase (323 aa).

The Mn(2+) site is built by H119, D142, H144, and D146. Substrate is bound by residues 144 to 148, 155 to 157, and D198; these read HADIN and SKN. Residues D247 and D249 each coordinate Mn(2+). Substrate-binding residues include T261 and E292.

This sequence belongs to the arginase family. In terms of assembly, homotrimer. Requires Mn(2+) as cofactor.

The enzyme catalyses L-arginine + H2O = urea + L-ornithine. The protein operates within nitrogen metabolism; urea cycle; L-ornithine and urea from L-arginine: step 1/1. The sequence is that of Arginase (aru1) from Schizosaccharomyces pombe (strain 972 / ATCC 24843) (Fission yeast).